We begin with the raw amino-acid sequence, 316 residues long: Protein lifeguard 2 (316 aa).

The segment at M1–P53 is disordered. Transmembrane regions (helical) follow at residues V106–F126, P138–C158, and F165–M185. A glycan (N-linked (GlcNAc...) asparagine) is linked at N191. The next 4 membrane-spanning stretches (helical) occupy residues S194–F214, G225–L245, V250–A270, and I290–L310.

This sequence belongs to the BI1 family. LFG subfamily. Interacts with FAS/TNFRSF6 and BAX. As to expression, highly expressed in breast carcinoma tissues. Enhanced expression correlates with the grade of the tumor (grade II/grade III) in primary breast tumors (at protein level). Widely expressed. Expressed at high levels in the brain especially in the hippocampus.

It is found in the cell membrane. It localises to the membrane raft. The protein localises to the postsynaptic cell membrane. Functionally, antiapoptotic protein which protects cells uniquely from Fas-induced apoptosis. Regulates Fas-mediated apoptosis in neurons by interfering with caspase-8 activation. May play a role in cerebellar development by affecting cerebellar size, internal granular layer (IGL) thickness, and Purkinje cell (PC) development. This is Protein lifeguard 2 (FAIM2) from Homo sapiens (Human).